The sequence spans 457 residues: Bifunctional protein GlmU (457 aa).

A pyrophosphorylase region spans residues 1–236 (MDQDACTHSA…DWHFLGVNTP (236 aa)). Residues 14-17 (LAAG), lysine 28, glutamine 79, and 84-85 (GT) each bind UDP-N-acetyl-alpha-D-glucosamine. Aspartate 110 is a binding site for Mg(2+). Positions 145, 159, 176, and 234 each coordinate UDP-N-acetyl-alpha-D-glucosamine. Asparagine 234 provides a ligand contact to Mg(2+). The linker stretch occupies residues 237 to 257 (KDLSYVESIQQAFIIEKLLQS). The segment at 258–457 (GVIIHSPESV…GKQKNFSKRK (200 aa)) is N-acetyltransferase. Residues arginine 340 and lysine 358 each contribute to the UDP-N-acetyl-alpha-D-glucosamine site. Histidine 370 functions as the Proton acceptor in the catalytic mechanism. Residues tyrosine 373 and asparagine 384 each contribute to the UDP-N-acetyl-alpha-D-glucosamine site. Acetyl-CoA-binding positions include alanine 387, 393–394 (NY), serine 412, alanine 430, and arginine 447.

The protein in the N-terminal section; belongs to the N-acetylglucosamine-1-phosphate uridyltransferase family. It in the C-terminal section; belongs to the transferase hexapeptide repeat family. Homotrimer. Mg(2+) serves as cofactor.

The protein localises to the cytoplasm. The enzyme catalyses alpha-D-glucosamine 1-phosphate + acetyl-CoA = N-acetyl-alpha-D-glucosamine 1-phosphate + CoA + H(+). It catalyses the reaction N-acetyl-alpha-D-glucosamine 1-phosphate + UTP + H(+) = UDP-N-acetyl-alpha-D-glucosamine + diphosphate. Its pathway is nucleotide-sugar biosynthesis; UDP-N-acetyl-alpha-D-glucosamine biosynthesis; N-acetyl-alpha-D-glucosamine 1-phosphate from alpha-D-glucosamine 6-phosphate (route II): step 2/2. It participates in nucleotide-sugar biosynthesis; UDP-N-acetyl-alpha-D-glucosamine biosynthesis; UDP-N-acetyl-alpha-D-glucosamine from N-acetyl-alpha-D-glucosamine 1-phosphate: step 1/1. The protein operates within bacterial outer membrane biogenesis; LPS lipid A biosynthesis. Functionally, catalyzes the last two sequential reactions in the de novo biosynthetic pathway for UDP-N-acetylglucosamine (UDP-GlcNAc). The C-terminal domain catalyzes the transfer of acetyl group from acetyl coenzyme A to glucosamine-1-phosphate (GlcN-1-P) to produce N-acetylglucosamine-1-phosphate (GlcNAc-1-P), which is converted into UDP-GlcNAc by the transfer of uridine 5-monophosphate (from uridine 5-triphosphate), a reaction catalyzed by the N-terminal domain. The sequence is that of Bifunctional protein GlmU from Lawsonia intracellularis (strain PHE/MN1-00).